A 1995-amino-acid polypeptide reads, in one-letter code: MDIESDHEPKESSVDLEGRHDSIRKSFEADDIDVTDENTIFSTSRKEQSTIEPMDSFVENNIANSSSQQSVSEIDIQLPSSEPKEGVKEESNLIESNSLDNVQEINPQNTIGDKSAHTEEESSNDNLVKITAGTIISDIMDEPVVDEDDKLSEEDLSKEDLETTLKGDENYSSSQKEIYDNDETIPKPPSPEVEKIETSTSVENAYITNSQYNDTLDMEDQTSDLITTFEHENEDHEVHEVPSIHGMEGTFETVNLTSEAGNEKEFNNDSVVLNTTPKEMQISSLDAVDKLEDKPVSNDNIKANIESSTTVDRASSQLESENNESTFFVHNQNSSGQHQTLDFVASKPVTDTPELSKENTLVSSENLNDPKPNLPETEVDFGEPLEVEAPSFVVQNNSAVQPTTQKTSEDSTDLHTNEIPNVAQPPSSFEKENNKDTSKLENPDISSSPLSPTEDLFPNDPEEENLFSAALGLNSNTGSQPSETQSKPSIDPSESITVTDNQDSLLFSQLTNNALQAENATKVSENTINDEELIDDSEFTSLMSNFLESSTVQTNKYLPKSSASPPANAPIVSSDVHKNENAGTARRAPQSGAFVASKAKYSSPYDLPEEIVQVAQQKRSVSQNYNRQYSFQPRPATPSNPPRSLPPPSGQVNAPMSQTPNPISFAYQHGTPLATPTMRANSFNSYPASSAEPIRRPATTTVGHTPNLYSPKTNTYNSRHMAYEMTKSHINVISPGPSLQVNAPYTPTSGELGNKVSNPTKEFVSTSSYAPAANTRNAIIREPGILSPLSPRVQPVLSRRESIISMGSSASSYVPLEIAPRPMSSLEHTMNSAMSPGNLQRTANLYKPMTTPNAYNIKNSNQRETKYPYQPQAINYSEVTQPGSSSLPTSGEEANIIRSPGFTPLAAQKDATIYTPSHAQATLYGNMDNNDRDNEGIHDILQSDMEPVLPPHNSAYHANAPVSSHSEGLNNRLPISPLPPQLHKTGTPSHQHGFDTAETTAKQYAPSIPPNFNPNVSIDTMTEGVALPSATLDSDKSSLHKRSAELSRNNSPRPDFLPLPNQPLLHSNLHSPVSPVVDSNEDSRLKFLSTQRPAFSFGPCGTIVMAFSTPSGLYTTSGKGTKFIAGPIKIEKLGDVLTDEYRHLKEFKGPYLASNGKVDKHGKAEAIEWLSKYIDRLNQSLEYDDKNITLKDKLLLLQCLKMLLEVSDRKLIVEKLRPILLPSFEIPEPCNTATSVQELINPEINQDDSPIVASRYCTTSFLHRFYEYLLSGNKDEALTYALQQKQWPYAIIVAHSIDAKTFQGVVRTFCKSEVKESMLRSGVGVNLQLSLQLMSDAHASSMSEFSSSTSLLNLADQSQASNALVAWKELLYNIIANHYSDQKEALRVLGTLLLQENRVYAAHLVYILSLSPDVCSNKSNSLFELVGLSKHNLYPSHDDLFDVTQLTEVLELVFNVYSEKTPVFFTHLVPYRLYEAEVLAEAGEVSAARKYCELIGNYLNRVAKKSNNVDPGFVLRVRDLTQQILENSAGSEDISSSWLGRTVSRPRLDTVLSSLGSKFSKFVAGDPNFDVMRPATVGPGPFGKVASQKNLTVQTNTNNAAMESFYSDRPTSSGPSYQNRTPLTGQESMNMGVYSPYRRSTEIAENMSMDGNAYPYTPASQENPYTPRHSQEDNASVLSQQPLTFYSNVADNSYMPVSASQEPKMGMGTAFNMPTNEVHGVGAEMASPYQPLQPASAHLPNLQPTLAPINQNAYVPSNIAPAMGAMQSAPSAEAVAAPSESLNLNKDRSQQAKQAAAQNVADLVRQEEEKEKQKQKAKKNAESGKKGGAKGWFSKLLRRDESKDQPTVYKAKLGEKSHLHYDKELKRWVNDDGSDLSNQAAPPPPPPMALPKAGPPSAAPTSALPPAGPPAGATAISGNPGMPAPVPLTGKETAVPLSSMPNAPPSVASNAKLPPASNNRKVDPLEDILQAMPPPTTRKARGKTSKRYVDVMRNS.

A compositionally biased stretch (basic and acidic residues) spans 1–28 (MDIESDHEPKESSVDLEGRHDSIRKSFE). 7 disordered regions span residues 1-32 (MDIE…ADDI), 61-127 (NIAN…NDNL), 140-198 (MDEP…KIET), 349-378 (VTDT…PETE), 392-496 (FVVQ…SESI), 557-594 (YLPK…SGAF), and 629-661 (YSFQ…QTPN). Polar residues predominate over residues 61–72 (NIANSSSQQSVS). Positions 82–91 (EPKEGVKEES) are enriched in basic and acidic residues. The segment covering 93 to 112 (LIESNSLDNVQEINPQNTIG) has biased composition (polar residues). Over residues 140 to 152 (MDEPVVDEDDKLS) the composition is skewed to acidic residues. A compositionally biased stretch (basic and acidic residues) spans 153–169 (EEDLSKEDLETTLKGDE). Polar residues-rich tracts occupy residues 358–367 (ENTLVSSENL) and 393–406 (VVQN…TTQK). Composition is skewed to basic and acidic residues over residues 407–416 (TSEDSTDLHT) and 429–442 (FEKE…KLEN). Residues 473-496 (LNSNTGSQPSETQSKPSIDPSESI) are compositionally biased toward polar residues. The segment covering 561–574 (SSASPPANAPIVSS) has biased composition (low complexity). Pro residues predominate over residues 635–649 (PATPSNPPRSLPPPS). The span at 650 to 661 (GQVNAPMSQTPN) shows a compositional bias: polar residues. Serine 790 bears the Phosphoserine mark. Disordered stretches follow at residues 945-994 (MEPV…QHGF), 1029-1063 (SATL…PNQP), 1605-1631 (FYSD…SMNM), 1649-1675 (MDGN…EDNA), and 1777-1995 (APSE…MRNS). Residues 1033–1045 (DSDKSSLHKRSAE) show a composition bias toward basic and acidic residues. Residues 1609–1629 (RPTSSGPSYQNRTPLTGQESM) are compositionally biased toward polar residues. Basic and acidic residues-rich tracts occupy residues 1804 to 1825 (VRQE…ESGK) and 1852 to 1870 (KLGE…RWVN). Residues 1881–1898 (APPPPPPMALPKAGPPSA) are compositionally biased toward pro residues. The segment covering 1899-1915 (APTSALPPAGPPAGATA) has biased composition (low complexity).

Belongs to the SEC16 family. As to quaternary structure, interacts with dil1.

Its subcellular location is the endoplasmic reticulum membrane. Functionally, involved in the initiation of assembly of the COPII coat required for the formation of transport vesicles from the endoplasmic reticulum (ER) and the selection of cargo molecules. Also involved in autophagy. The polypeptide is COPII coat assembly protein sec16 (sec16) (Schizosaccharomyces pombe (strain 972 / ATCC 24843) (Fission yeast)).